Reading from the N-terminus, the 262-residue chain is Intron-encoded DNA endonuclease ai2b (262 aa).

It belongs to the LAGLIDADG endonuclease family.

It localises to the mitochondrion. Mitochondrial DNA endonuclease involved in intron homing. The chain is Intron-encoded DNA endonuclease ai2b (ai2b) from Dictyostelium discoideum (Social amoeba).